A 496-amino-acid chain; its full sequence is Cyclin-L1 (496 aa).

2 cyclin-like regions span residues 68–170 and 183–267; these read ELIQ…RILK and KIIV…TTLR. The tract at residues 301 to 496 is disordered; that stretch reads NPDGTPAILS…SHSGHGRHRR (196 aa). The span at 322 to 347 shows a compositional bias: basic and acidic residues; the sequence is SPRDVKTEEKSPNFAKVKREMDDKQS. Basic residues-rich tracts occupy residues 358 to 392, 412 to 426, 434 to 446, and 456 to 468; these read ENKR…RRSR, RRHH…KLKH, RHAH…HSPS, and KKHR…HRER. The interval 363 to 406 is RS; the sequence is RSVSRSRSRTKSRSRSHSPRRHYNNRRRSRSGTYSSRSRSRSRS. A compositionally biased stretch (basic and acidic residues) spans 469–478; that stretch reads RERSRSFERS. The segment covering 479–496 has biased composition (basic residues); sequence HKNKHHGSSHSGHGRHRR.

It belongs to the cyclin family. Cyclin L subfamily.

It localises to the nucleus speckle. Its subcellular location is the nucleus. The protein localises to the nucleoplasm. In terms of biological role, involved in pre-mRNA splicing. This Xenopus laevis (African clawed frog) protein is Cyclin-L1 (ccnl1).